The following is a 533-amino-acid chain: Probable protein kinase UbiB (533 aa).

A helical membrane pass occupies residues 24 to 44 (LILELPMLPWWLRLLGATLPW). The 369-residue stretch at 126-494 (RFEREPLASA…WKGSRHDWLG (369 aa)) folds into the Protein kinase domain. ATP is bound by residues 132–140 (LASASVAQV) and Lys-154. The active-site Proton acceptor is Asp-289. A helical transmembrane segment spans residues 510 to 530 (LGQQLEAWPAWVMLAGGVFLI).

This sequence belongs to the ABC1 family. UbiB subfamily.

The protein localises to the cell inner membrane. It functions in the pathway cofactor biosynthesis; ubiquinone biosynthesis [regulation]. Functionally, is probably a protein kinase regulator of UbiI activity which is involved in aerobic coenzyme Q (ubiquinone) biosynthesis. The protein is Probable protein kinase UbiB of Pseudomonas aeruginosa (strain UCBPP-PA14).